The following is a 630-amino-acid chain: tRNA uridine 5-carboxymethylaminomethyl modification enzyme MnmG (630 aa).

Residue G14–G19 participates in FAD binding. NAD(+) is bound at residue G282–F296.

The protein belongs to the MnmG family. As to quaternary structure, homodimer. Heterotetramer of two MnmE and two MnmG subunits. Requires FAD as cofactor.

The protein resides in the cytoplasm. In terms of biological role, NAD-binding protein involved in the addition of a carboxymethylaminomethyl (cmnm) group at the wobble position (U34) of certain tRNAs, forming tRNA-cmnm(5)s(2)U34. This chain is tRNA uridine 5-carboxymethylaminomethyl modification enzyme MnmG, found in Treponema pallidum (strain Nichols).